The following is a 216-amino-acid chain: Putative ripening-related protein 4 (216 aa).

Positions 1-25 (MAANVKVLVVLALLQLMSLHAVVHG) are cleaved as a signal peptide.

This sequence belongs to the kiwellin family.

Its subcellular location is the secreted. This chain is Putative ripening-related protein 4, found in Oryza sativa subsp. japonica (Rice).